We begin with the raw amino-acid sequence, 460 residues long: Glutamate--tRNA ligase 2 (460 aa).

The 'HIGH' region motif lies at 8–18 (PSPTGFLHVGG). The 'KMSKS' region motif lies at 237–241 (KLSKR). Lys-240 provides a ligand contact to ATP.

It belongs to the class-I aminoacyl-tRNA synthetase family. Glutamate--tRNA ligase type 1 subfamily. As to quaternary structure, monomer.

It localises to the cytoplasm. It carries out the reaction tRNA(Glu) + L-glutamate + ATP = L-glutamyl-tRNA(Glu) + AMP + diphosphate. Its function is as follows. Catalyzes the attachment of glutamate to tRNA(Glu) in a two-step reaction: glutamate is first activated by ATP to form Glu-AMP and then transferred to the acceptor end of tRNA(Glu). This Campylobacter fetus subsp. fetus (strain 82-40) protein is Glutamate--tRNA ligase 2.